We begin with the raw amino-acid sequence, 480 residues long: Gamma-aminobutyric acid receptor subunit rho-1 (480 aa).

The signal sequence occupies residues 1 to 21 (MLAVQNMKFGIFLLWWGWVLA). At 22 to 281 (AESTAHWPGR…LYINFTLRRH (260 aa)) the chain is on the extracellular side. The segment covering 29–38 (PGREVHEPSR) has biased composition (basic and acidic residues). The disordered stretch occupies residues 29 to 67 (PGREVHEPSRKGSRPQRQRRGAHDDAHKQGSPILRRSSD). The span at 39–48 (KGSRPQRQRR) shows a compositional bias: basic residues. R126 contacts 4-aminobutanoate. N141 carries an N-linked (GlcNAc...) asparagine glycan. S190 is a binding site for 4-aminobutanoate. C199 and C213 form a disulfide bridge. Position 218 (E218) interacts with 4-aminobutanoate. N235 and N275 each carry an N-linked (GlcNAc...) asparagine glycan. Residues 282–302 (IFFFLLQTYFPATLMVMLSWV) traverse the membrane as a helical segment. Over 303–314 (SFWIDRRAVPAR) the chain is Cytoplasmic. Residues 315-335 (VPLGITTVLTMSTIITGVNAS) traverse the membrane as a helical segment. The Extracellular portion of the chain corresponds to 336-346 (MPRVSYIKAVD). Residues 347–367 (IYLWVSFVFVFLSVLEYAAVN) form a helical membrane-spanning segment. Residues 368 to 458 (YLTTVQERKE…MRINTHAIDK (91 aa)) are Cytoplasmic-facing. Residues 459–479 (YSRIIFPAAYILFNLIYWSIF) traverse the membrane as a helical segment. S480 is a topological domain (extracellular).

It belongs to the ligand-gated ion channel (TC 1.A.9) family. Gamma-aminobutyric acid receptor (TC 1.A.9.5) subfamily. GABRR1 sub-subfamily. Three rho subunits (rho-1/GBRR1, rho-2/GBRR2 and rho-3/GBRR3) coassemble either to form functional homopentamers or heteropentamers. Rho-1/GBRR1 subunits can also associate with alpha-1/GBRA1 subunits to form a functional GABAAR. Interacts with SQSTM1. In terms of tissue distribution, expressed in the cerebellum.

The protein resides in the postsynaptic cell membrane. It is found in the cell membrane. The enzyme catalyses chloride(in) = chloride(out). Its activity is regulated as follows. Inhibited by TPMPA, a rho-specific antagonist, when forming a homopentamer. In contrast with other GABAARs, rho-1 GABAAR is not inhibited by bicuculline when forming a homopentamer. Its function is as follows. Rho subunit of the pentameric ligand-gated chloride channels responsible for mediating the effects of gamma-aminobutyric acid (GABA), the major inhibitory neurotransmitter in the brain. Rho-containing GABA-gated chloride channels are a subclass of GABA(A) receptors (GABAARs) entirely composed of rho subunits, where GABA molecules bind at the rho intersubunit interfaces. When activated by GABA, rho-GABAARs selectively allow the flow of chloride anions across the cell membrane down their electrochemical gradient. Rho-1 subunits are primarily expressed in retina where rho-1-containing GABAARs play a role in retinal neurotransmission. Rho-1 GABAARs are also involved in neuronal tonic (extrasynaptic) and phasic (synaptic) transmission in the Purkinje neurons of the cerebellum. Rho-1 GABAARs may also contribute to the regulation of glial development in the cerebellum by controlling extrasynaptic transmission. This chain is Gamma-aminobutyric acid receptor subunit rho-1, found in Mus musculus (Mouse).